Consider the following 124-residue polypeptide: Small ribosomal subunit protein uS10z/uS10x (124 aa).

This sequence belongs to the universal ribosomal protein uS10 family.

The protein is Small ribosomal subunit protein uS10z/uS10x (RPS20A) of Arabidopsis thaliana (Mouse-ear cress).